We begin with the raw amino-acid sequence, 61 residues long: Small ribosomal subunit protein uS14 (61 aa).

Zn(2+) is bound by residues Cys24, Cys27, Cys40, and Cys43.

Belongs to the universal ribosomal protein uS14 family. Zinc-binding uS14 subfamily. As to quaternary structure, part of the 30S ribosomal subunit. Contacts proteins S3 and S10. It depends on Zn(2+) as a cofactor.

Functionally, binds 16S rRNA, required for the assembly of 30S particles and may also be responsible for determining the conformation of the 16S rRNA at the A site. This Alkaliphilus oremlandii (strain OhILAs) (Clostridium oremlandii (strain OhILAs)) protein is Small ribosomal subunit protein uS14.